We begin with the raw amino-acid sequence, 196 residues long: Chromophore lyase CpcT/CpeT (196 aa).

It belongs to the CpcT/CpeT biliprotein lyase family.

In terms of biological role, covalently attaches a chromophore to Cys residue(s) of phycobiliproteins. The chain is Chromophore lyase CpcT/CpeT from Synechocystis sp. (strain ATCC 27184 / PCC 6803 / Kazusa).